Reading from the N-terminus, the 768-residue chain is P-selectin (768 aa).

The first 41 residues, 1–41, serve as a signal peptide directing secretion; the sequence is MAGCPKGSWKPRLRSVVLGAAQLIWLSALISELVNRKKVAT. The Extracellular portion of the chain corresponds to 42–709; the sequence is WTYNYSTKAY…QAGTLTIQEA (668 aa). Asn-45, Asn-54, and Asn-107 each carry an N-linked (GlcNAc...) asparagine glycan. Residues 58-158 form the C-type lectin domain; sequence AFCKRHFTDL…PCFKRKRALC (101 aa). Disulfide bonds link Cys-60–Cys-158, Cys-131–Cys-150, Cys-168–Cys-183, Cys-185–Cys-194, Cys-200–Cys-244, Cys-230–Cys-257, Cys-262–Cys-306, Cys-292–Cys-319, Cys-324–Cys-368, Cys-354–Cys-381, Cys-386–Cys-430, Cys-416–Cys-443, Cys-448–Cys-492, Cys-478–Cys-505, Cys-510–Cys-554, Cys-540–Cys-567, Cys-580–Cys-624, Cys-610–Cys-637, Cys-642–Cys-686, and Cys-672–Cys-699. The Ca(2+) site is built by Glu-121, Asn-123, and Asn-124. An a carbohydrate-binding site is contributed by Asn-123. 2 residues coordinate a carbohydrate: Glu-133 and Asn-146. Ca(2+)-binding residues include Asn-146 and Asp-147. The EGF-like domain occupies 159–195; that stretch reads YTASCQDMSCNSQGERIETIGSYTCSCYPGFYGPECE. Sushi domains follow at residues 198–259, 260–321, 322–383, 384–445, 446–507, 508–569, 578–639, and 640–701; these read QECG…QCKA, VQCQ…TCEA, IACE…VCEA, LQCQ…ECQA, VSCT…MCEA, IKCP…TCKG, VRCP…VCRA, and VKCS…TCQA. Asn-212 is a glycosylation site (N-linked (GlcNAc...) asparagine). Residue Asn-347 is glycosylated (N-linked (GlcNAc...) asparagine). N-linked (GlcNAc...) asparagine glycosylation is present at Asn-456. Asn-603 is a glycosylation site (N-linked (GlcNAc...) asparagine). N-linked (GlcNAc...) asparagine glycosylation is found at Asn-654, Asn-661, and Asn-679. Residues 710–733 traverse the membrane as a helical segment; it reads LTYLGGALASTSGLAVGGTLLALL. Over 734 to 768 the chain is Cytoplasmic; the sequence is RKRLRKKDDGKCPLNPHSHLGTYGVFTNAAYDPTP. Residue Cys-745 is the site of S-palmitoyl cysteine; alternate attachment. Residue Cys-745 is the site of S-stearoyl cysteine; alternate attachment. An Endocytosis signal motif is present at residues 756–759; sequence YGVF. The interaction with SNX17 stretch occupies residues 759-768; it reads FTNAAYDPTP.

The protein belongs to the selectin/LECAM family. In terms of assembly, interacts with SNX17. Interacts with SELPLG/PSGL1 and PODXL2 and mediates neutrophil adhesion and leukocyte rolling. This interaction requires the sialyl-Lewis X epitope of SELPLG and PODXL2, and specific tyrosine sulfation on SELPLG. Interacts (via C-type lectin domain) with alpha-IIb/beta3 integrin ITGA2B:ITGB3 and alpha-V/beta-3 integrin ITGAV:ITGB3. Interacts with alpha5/beta1 integrin ITGA5:ITGB1 and alpha4/beta1 integrin ITGA4:ITGB. In terms of tissue distribution, not detected in the absence of exposure to lipopolysaccharide (LPS). Detected only after exposure to lipopolysaccharide (LPS) in the tissues examined: spleen, lung, brain, liver, heart, kidney, thymus and small intestine.

The protein localises to the cell membrane. Its function is as follows. Ca(2+)-dependent receptor for myeloid cells that binds to carbohydrates on neutrophils and monocytes. Mediates the interaction of activated endothelial cells or platelets with leukocytes. The ligand recognized is sialyl-Lewis X. Mediates rapid rolling of leukocyte rolling over vascular surfaces during the initial steps in inflammation through interaction with SELPLG. Mediates cell-cell interactions and cell adhesion via the interaction with integrin alpha-IIb/beta3 (ITGA2B:ITGB3) and integrin alpha-V/beta-3 (ITGAV:ITGB3). This chain is P-selectin (Selp), found in Rattus norvegicus (Rat).